The chain runs to 280 residues: Pantothenate synthetase (280 aa).

30 to 37 (MGALHRGH) lines the ATP pocket. His-37 acts as the Proton donor in catalysis. Gln-61 is a binding site for (R)-pantoate. Gln-61 serves as a coordination point for beta-alanine. ATP is bound at residue 148–151 (GEKD). Gln-154 serves as a coordination point for (R)-pantoate. Residues Val-177 and 185-188 (LSSR) each bind ATP.

Belongs to the pantothenate synthetase family. In terms of assembly, homodimer.

The protein localises to the cytoplasm. The enzyme catalyses (R)-pantoate + beta-alanine + ATP = (R)-pantothenate + AMP + diphosphate + H(+). The protein operates within cofactor biosynthesis; (R)-pantothenate biosynthesis; (R)-pantothenate from (R)-pantoate and beta-alanine: step 1/1. In terms of biological role, catalyzes the condensation of pantoate with beta-alanine in an ATP-dependent reaction via a pantoyl-adenylate intermediate. This Azobacteroides pseudotrichonymphae genomovar. CFP2 protein is Pantothenate synthetase.